A 406-amino-acid polypeptide reads, in one-letter code: Anthranilate 1,2-dioxygenase system ferredoxin--NAD(+) reductase component (406 aa).

FAD is bound at residue 5–37; it reads PFVIVGAGHAARRTAEALRARDADAPIVMIGAE. 152–161 contacts NAD(+); that stretch reads GGGFIGLEVA.

The protein belongs to the FAD-dependent oxidoreductase family. Part of a multicomponent enzyme system composed of a reductase (AndAa), a ferredoxin (AndAb) and a two-subunit oxygenase component (AndAc and AndAd). It depends on FAD as a cofactor.

The catalysed reaction is 2 reduced [2Fe-2S]-[ferredoxin] + NAD(+) + H(+) = 2 oxidized [2Fe-2S]-[ferredoxin] + NADH. The protein operates within aromatic compound metabolism; anthranilate degradation via hydroxylation; catechol from anthranilate: step 1/1. In terms of biological role, part of the multicomponent anthranilate dioxygenase, that converts anthranilate to catechol. Probably transfers electrons from ferredoxin (AndAb) to NADH. The protein is Anthranilate 1,2-dioxygenase system ferredoxin--NAD(+) reductase component of Burkholderia cepacia (Pseudomonas cepacia).